Here is a 488-residue protein sequence, read N- to C-terminus: UDP-glycosyltransferase 85A3 (488 aa).

UDP-alpha-D-glucose-binding positions include Ser-306, Cys-363–Gln-365, His-380–Glu-388, and Phe-402–Gln-405.

Belongs to the UDP-glycosyltransferase family. As to expression, expressed in roots and flowers.

This is UDP-glycosyltransferase 85A3 (UGT85A3) from Arabidopsis thaliana (Mouse-ear cress).